Consider the following 487-residue polypeptide: MLRIAKEALTFDDVLLVPAHSTVLPNTAELGTQLTATIRLNIPMLSAAMDTVTESRLAIALAQEGGLGFIHKNMSIERQAEEVSRVKKHESGVVTEPQTVTPTTTLRQVKELTARNGFAGYPVVTEDYELVGIITGRDVRFVTDLDQPVTAVMTPKERLVTVKEGETREVVLQKMHEKRVEKVLVVDDSFHLRGMITVKDFQKAERKPNACKDEHGRLRVGAAVGAGAGNEERIDALVAAGVDVLLIDSSHGHSEGVLQRIRETRAKYPNLQIVGGNVATGAGAKALADAGVSAVKVGIGPGSICTTRIVTGVGVPQITAIADAVEALEGTGIPVIADGGIRFSGDIAKAIAAGASCVMVGSMLAGTEESPGEIELYQGRSFKSYRGMGSLGAMSKGSSDRYFQTDNAADKLVPEGIEGRVAYKGLLKEIVHQQMGGLRSCMGLTGCGTINELRTKAEFVRISGAGIQESHVHDVTITKESPNYRMM.

CBS domains are found at residues 93–152 (VVTE…VTAV) and 153–214 (MTPK…CKDE). Residues Asp248, 248 to 250 (DSS), and 298 to 300 (GIG) each bind NAD(+). K(+) contacts are provided by Gly300 and Gly302. An IMP-binding site is contributed by Ser303. Position 305 (Cys305) interacts with K(+). Catalysis depends on Cys305, which acts as the Thioimidate intermediate. IMP is bound by residues 338-340 (DGG), 361-362 (GS), and 385-389 (YRGMG). Arg401 serves as the catalytic Proton acceptor. Glu415 contributes to the IMP binding site. 3 residues coordinate K(+): Glu469, Ser470, and His471.

The protein belongs to the IMPDH/GMPR family. In terms of assembly, homotetramer. Requires K(+) as cofactor.

It carries out the reaction IMP + NAD(+) + H2O = XMP + NADH + H(+). It functions in the pathway purine metabolism; XMP biosynthesis via de novo pathway; XMP from IMP: step 1/1. Mycophenolic acid (MPA) is a non-competitive inhibitor that prevents formation of the closed enzyme conformation by binding to the same site as the amobile flap. In contrast, mizoribine monophosphate (MZP) is a competitive inhibitor that induces the closed conformation. MPA is a potent inhibitor of mammalian IMPDHs but a poor inhibitor of the bacterial enzymes. MZP is a more potent inhibitor of bacterial IMPDH. In terms of biological role, catalyzes the conversion of inosine 5'-phosphate (IMP) to xanthosine 5'-phosphate (XMP), the first committed and rate-limiting step in the de novo synthesis of guanine nucleotides, and therefore plays an important role in the regulation of cell growth. In Yersinia pestis, this protein is Inosine-5'-monophosphate dehydrogenase.